We begin with the raw amino-acid sequence, 582 residues long: MAAAASPPRGFCRSVHWFRRGLRLHDNPALQAALRGAASLRCIYILDPWFAASSAVGINRWRFLLQSLEDLDNSLRKLNSRLFVVRGQPTDVFPRLFKEWGVTRLAFEYDSEPFGKERDAAIIKLAKEAGVEVVIENSHTLYNLDRIIELNGNKPPLTYKRFQAIISRMELPKKPVSSIVSQQMETCKVDIQENHDDVYGVPSLEELGFPTDGLAPAVWQGGETEALARLDKHLERKAWVANYERPRMNANSLLASPTGLSPYLRFGCLSCRLFYYRLWELYKKVKRNSTPPLSLYGQLLWREFFYTAATNNPKFDRMEGNPICIQIPWDKNPEALAKWAEGKTGFPWIDAIMTQLRQEGWIHHLARHAVACFLTRGDLWISWESGVRVFDELLLDADFSVNAGSWMWLSCSAFFQQFFHCYCPVGFGRRTDPSGDYVKRYLPKLKGFPSRYIYEPWNAPESVQKAAKCIIGVDYPKPMVNHAETSRLNIERMKQIYQQLSRYRGLCLLASVPSCVEDLSGPVTDSAPGQGSSTSTAVRLPQSDQASPKRKHEGAEELCTEELYKRAKVTGLPAPEIPGKSS.

Residues 12–141 (CRSVHWFRRG…EVVIENSHTL (130 aa)) form the Photolyase/cryptochrome alpha/beta domain. FAD is bound by residues Ser261, Gln298, His364, and 396–398 (DAD). The tract at residues 521-559 (GPVTDSAPGQGSSTSTAVRLPQSDQASPKRKHEGAEELC) is disordered. Residues 527 to 546 (APGQGSSTSTAVRLPQSDQA) are compositionally biased toward polar residues.

Belongs to the DNA photolyase class-1 family. Component of the circadian core oscillator, which includes the CRY proteins, CLOCK or NPAS2, BMAL1 or BMAL2, CSNK1E, and the PER proteins. FAD is required as a cofactor. The cofactor is (6R)-5,10-methylene-5,6,7,8-tetrahydrofolate. As to expression, expressed in the pineal gland.

Its subcellular location is the cytoplasm. The protein localises to the nucleus. Functionally, transcriptional repressor which forms a core component of the circadian clock. The circadian clock, an internal time-keeping system, regulates various physiological processes through the generation of approximately 24 hour circadian rhythms in gene expression, which are translated into rhythms in metabolism and behavior. It is derived from the Latin roots 'circa' (about) and 'diem' (day) and acts as an important regulator of a wide array of physiological functions including metabolism, sleep, body temperature, blood pressure, endocrine, immune, cardiovascular, and renal function. Consists of two major components: the central clock, residing in the suprachiasmatic nucleus (SCN) of the brain, and the peripheral clocks that are present in nearly every tissue and organ system. Both the central and peripheral clocks can be reset by environmental cues, also known as Zeitgebers (German for 'timegivers'). The predominant Zeitgeber for the central clock is light, which is sensed by retina and signals directly to the SCN. The central clock entrains the peripheral clocks through neuronal and hormonal signals, body temperature and feeding-related cues, aligning all clocks with the external light/dark cycle. Circadian rhythms allow an organism to achieve temporal homeostasis with its environment at the molecular level by regulating gene expression to create a peak of protein expression once every 24 hours to control when a particular physiological process is most active with respect to the solar day. Transcription and translation of core clock components (CLOCK, NPAS2, BMAL1, BMAL2, PER1, PER2, PER3, CRY1 and CRY2) plays a critical role in rhythm generation, whereas delays imposed by post-translational modifications (PTMs) are important for determining the period (tau) of the rhythms (tau refers to the period of a rhythm and is the length, in time, of one complete cycle). A diurnal rhythm is synchronized with the day/night cycle, while the ultradian and infradian rhythms have a period shorter and longer than 24 hours, respectively. Disruptions in the circadian rhythms contribute to the pathology of cardiovascular diseases, cancer, metabolic syndromes and aging. A transcription/translation feedback loop (TTFL) forms the core of the molecular circadian clock mechanism. Transcription factors, CLOCK or NPAS2 and BMAL1 or BMAL2, form the positive limb of the feedback loop, act in the form of a heterodimer and activate the transcription of core clock genes and clock-controlled genes (involved in key metabolic processes), harboring E-box elements (5'-CACGTG-3') within their promoters. The core clock genes: PER1/2/3 and CRY1/2 which are transcriptional repressors form the negative limb of the feedback loop and interact with the CLOCK|NPAS2-BMAL1|BMAL2 heterodimer inhibiting its activity and thereby negatively regulating their own expression. This heterodimer also activates nuclear receptors NR1D1/2, RORA/B/G, which form a second feedback loop and which activate and repress BMAL1 transcription, respectively. CRY1 and CRY2 have redundant functions but also differential and selective contributions at least in defining the pace of the SCN circadian clock and its circadian transcriptional outputs. Less potent transcriptional repressor in cerebellum and liver than CRY1, though less effective in lengthening the period of the SCN oscillator. Seems to play a critical role in tuning SCN circadian period by opposing the action of CRY1. With CRY1, dispensable for circadian rhythm generation but necessary for the development of intercellular networks for rhythm synchrony. Represses CLOCK-BMAL1-mediated transcriptional activation. This is Cryptochrome-2 (CRY2) from Gallus gallus (Chicken).